A 149-amino-acid chain; its full sequence is UPF0178 protein SE_0451 (149 aa).

The protein belongs to the UPF0178 family.

This Staphylococcus epidermidis (strain ATCC 12228 / FDA PCI 1200) protein is UPF0178 protein SE_0451.